A 430-amino-acid polypeptide reads, in one-letter code: Tyrosine--tRNA ligase (430 aa).

Position 32 (Tyr32) interacts with L-tyrosine. The 'HIGH' region signature appears at 37 to 46; that stretch reads PTADSLHIGH. 2 residues coordinate L-tyrosine: Tyr172 and Gln176. A 'KMSKS' region motif is present at residues 232–236; sequence KFGKT. Position 235 (Lys235) interacts with ATP. In terms of domain architecture, S4 RNA-binding spans 362–429; the sequence is IKAVDLCTEK…GKKNYYLLIA (68 aa).

The protein belongs to the class-I aminoacyl-tRNA synthetase family. TyrS type 1 subfamily. As to quaternary structure, homodimer.

It localises to the cytoplasm. It catalyses the reaction tRNA(Tyr) + L-tyrosine + ATP = L-tyrosyl-tRNA(Tyr) + AMP + diphosphate + H(+). Catalyzes the attachment of tyrosine to tRNA(Tyr) in a two-step reaction: tyrosine is first activated by ATP to form Tyr-AMP and then transferred to the acceptor end of tRNA(Tyr). The sequence is that of Tyrosine--tRNA ligase from Parabacteroides distasonis (strain ATCC 8503 / DSM 20701 / CIP 104284 / JCM 5825 / NCTC 11152).